Here is a 95-residue protein sequence, read N- to C-terminus: MKISKEEVAYVAHLARLEFSESEMETFTFQMNEILLYMDKLNEVDTSGVEPLSHAIALHNAFREDKVQESLSQDLSLANAPDPRGEFFRVPKVID.

Belongs to the GatC family. In terms of assembly, heterotrimer of A, B and C subunits.

It catalyses the reaction L-glutamyl-tRNA(Gln) + L-glutamine + ATP + H2O = L-glutaminyl-tRNA(Gln) + L-glutamate + ADP + phosphate + H(+). It carries out the reaction L-aspartyl-tRNA(Asn) + L-glutamine + ATP + H2O = L-asparaginyl-tRNA(Asn) + L-glutamate + ADP + phosphate + 2 H(+). Allows the formation of correctly charged Asn-tRNA(Asn) or Gln-tRNA(Gln) through the transamidation of misacylated Asp-tRNA(Asn) or Glu-tRNA(Gln) in organisms which lack either or both of asparaginyl-tRNA or glutaminyl-tRNA synthetases. The reaction takes place in the presence of glutamine and ATP through an activated phospho-Asp-tRNA(Asn) or phospho-Glu-tRNA(Gln). This Syntrophus aciditrophicus (strain SB) protein is Aspartyl/glutamyl-tRNA(Asn/Gln) amidotransferase subunit C.